A 291-amino-acid polypeptide reads, in one-letter code: RPE-retinal G protein-coupled receptor (291 aa).

The Extracellular portion of the chain corresponds to 1–15; the sequence is MAETSALPTGFGELE. A helical transmembrane segment spans residues 16–36; sequence VLAVGMVLLVEALSGLSLNTL. Over 37-52 the chain is Cytoplasmic; it reads TIFSFCKTPELRTPCH. A helical transmembrane segment spans residues 53–73; that stretch reads LLVLSLALADSGISLNALVAA. Residues 74 to 91 are Extracellular-facing; it reads TSSLLRRWPYGSDGCQAH. C88 and C162 are oxidised to a cystine. The chain crosses the membrane as a helical span at residues 92–112; the sequence is GFQGFVTALASICSSAAIAWG. Residues 113–130 lie on the Cytoplasmic side of the membrane; that stretch reads RYHHYCTRSQLAWNSAVS. Residues 131–151 form a helical membrane-spanning segment; sequence LVLFVWLSSAFWAALPLLGWG. Residues 152–175 lie on the Extracellular side of the membrane; the sequence is HYDYEPLGTCCTLDYSKGDRNFTS. Residue N172 is glycosylated (N-linked (GlcNAc...) asparagine). Residues 176–196 form a helical membrane-spanning segment; sequence FLFTMSFFNFAMPLFITITSY. Residues 197–219 are Cytoplasmic-facing; that stretch reads SLMEQKLGKSGHLQVNTTLPART. Residues 220-240 form a helical membrane-spanning segment; sequence LLLGWGPYAILYLYAVIADVT. Topologically, residues 241–247 are extracellular; sequence SISPKLQ. A helical membrane pass occupies residues 248–268; the sequence is MVPALIAKMVPTINAINYALG. K255 bears the N6-(retinylidene)lysine mark. The Cytoplasmic portion of the chain corresponds to 269-291; the sequence is NEMVCRGIWQCLSPQKREKDRTK.

Belongs to the G-protein coupled receptor 1 family. Opsin subfamily. In terms of processing, covalently binds all-trans- and 11-cis-retinal. As to expression, preferentially expressed at high levels in the retinal pigment epithelium (RPE) and Mueller cells of the neural retina.

It is found in the membrane. In terms of biological role, receptor for all-trans- and 11-cis-retinal. Binds preferentially to the former and may catalyze the isomerization of the chromophore by a retinochrome-like mechanism. This Homo sapiens (Human) protein is RPE-retinal G protein-coupled receptor (RGR).